Consider the following 319-residue polypeptide: 8-methylmenaquinol:fumarate reductase iron-sulfur subunit (319 aa).

The 2Fe-2S ferredoxin-type domain maps to 1–96 (MKFIIDRFDG…TFRISPLGNH (96 aa)). Residues cysteine 51, cysteine 56, cysteine 59, and cysteine 71 each coordinate [2Fe-2S] cluster. 4Fe-4S ferredoxin-type domains are found at residues 139–168 (FDRI…QSDY) and 193–224 (VKPA…AEDI). The [4Fe-4S] cluster site is built by cysteine 148, cysteine 151, cysteine 154, cysteine 158, cysteine 204, cysteine 207, cysteine 210, and cysteine 214.

The protein belongs to the succinate dehydrogenase/fumarate reductase iron-sulfur protein family. The MFR complex is composed of three subunits: a flavoprotein (SdhA), an iron-sulfur protein (SdhB), and one hydrophobic anchor protein (SdhE). [2Fe-2S] cluster is required as a cofactor. Requires [4Fe-4S] cluster as cofactor.

It is found in the periplasm. The protein localises to the cell membrane. The catalysed reaction is 8-methylmenaquinone-6 + succinate = 8-methylmenaquinol-6 + fumarate. In terms of biological role, iron-sulfur subunit of 8-methylmenaquinol:fumarate reductase (MFR), that catalyzes the reduction of fumarate using 8-methylmenaquinol-6 as electron donor. The complex shows no succinate oxidation activity. Is involved in anaerobic metabolism. This chain is 8-methylmenaquinol:fumarate reductase iron-sulfur subunit, found in Wolinella succinogenes (strain ATCC 29543 / DSM 1740 / CCUG 13145 / JCM 31913 / LMG 7466 / NCTC 11488 / FDC 602W) (Vibrio succinogenes).